The following is a 170-amino-acid chain: Cilia- and flagella-associated protein 276 (170 aa).

Disordered regions lie at residues 1 to 37 (MPLTRDPFQNPALDKDDSYLGKSRASKKLPYKNPTHL) and 151 to 170 (HTAATNGGYSRKNDGGFFST).

As to quaternary structure, microtubule inner protein component of sperm flagellar doublet microtubules. In terms of tissue distribution, expressed in trachea multiciliated cells.

Its subcellular location is the cytoplasm. It is found in the cytoskeleton. The protein localises to the cilium axoneme. It localises to the flagellum axoneme. In terms of biological role, microtubule inner protein (MIP) part of the dynein-decorated doublet microtubules (DMTs) in cilia axoneme, which is required for motile cilia beating. May play an important role for the maintenance of myelin-axon integrity. May affect intracellular Ca(2+) homeostasis. This chain is Cilia- and flagella-associated protein 276, found in Bos taurus (Bovine).